The primary structure comprises 29 residues: Galanin (29 aa).

Position 29 is an alanine amide (A29).

It belongs to the galanin family.

The protein localises to the secreted. Functionally, contracts smooth muscle of the gastrointestinal and genitourinary tract, regulates growth hormone release, modulates insulin release, and may be involved in the control of adrenal secretion. The chain is Galanin (GAL) from Alligator mississippiensis (American alligator).